The primary structure comprises 361 residues: MSKSALDPVEFLKGALEIPSPSGKERAVAEYLAEGMQKLGLKGFVDEADNARGQVGEGPVQVVLLGHIDTVPGQIPVRLEGGRLFGRGAVDAKGPFVAMIFAAAGLSEEARRRLTVHLVGATEEEAPSSKGARFVAPRLKPHYAVIGEPSGWEGITLGYKGRLLVKARREKDHFHSAHHEPNAAEELISYFVAIKAWAEAMNVGQRPFDQVQYTLRDFRVHPAELRQVAEMFFDLRLPPRLPPEEAIRHLTAYAPPTIELEFFGREVPYQGPKDTPLTRAFRQAIRKAGGRPVFKLKTGTSDMNVLAPHWPVPMVAYGPGDSTLDHTPYEHVEVAEFLKGIEVLRGALEALAQTHAGEKEG.

H67 contacts Zn(2+). D69 is an active-site residue. D91 contributes to the Zn(2+) binding site. The Proton acceptor role is filled by E124. Residues E125, E148, and H326 each coordinate Zn(2+).

The protein belongs to the peptidase M20A family. LysK subfamily. The cofactor is Zn(2+). Co(2+) is required as a cofactor.

The protein localises to the cytoplasm. The enzyme catalyses [amino-group carrier protein]-C-terminal-gamma-(L-lysyl)-L-glutamate + H2O = [amino-group carrier protein]-C-terminal-L-glutamate + L-lysine. Its pathway is amino-acid biosynthesis; L-lysine biosynthesis via AAA pathway; L-lysine from L-alpha-aminoadipate (Thermus route): step 5/5. Catalyzes the release of L-lysine from [LysW]-gamma-L-lysine. The protein is [LysW]-lysine hydrolase of Thermus thermophilus (strain ATCC 27634 / DSM 579 / HB8).